The primary structure comprises 91 residues: Mercuric transport protein periplasmic component (91 aa).

An N-terminal signal peptide occupies residues 1–19 (MKKLFASLALAAFVAPVFA). Positions 22-88 (QTVTLSVPGM…ATEDAGYPSS (67 aa)) constitute an HMA domain. 2 residues coordinate Hg(2+): cysteine 33 and cysteine 36.

The protein belongs to the MerP family. As to quaternary structure, monomer.

It localises to the periplasm. Its function is as follows. Involved in mercury resistance. Acts as a mercury scavenger that specifically binds to a mercuric ion in the periplasm and probably passes it to the cytoplasmic mercuric reductase MerA via the mercuric transport protein MerT. The chain is Mercuric transport protein periplasmic component from Acinetobacter calcoaceticus.